A 424-amino-acid polypeptide reads, in one-letter code: Histidine--tRNA ligase (424 aa).

Belongs to the class-II aminoacyl-tRNA synthetase family. In terms of assembly, homodimer.

It is found in the cytoplasm. The enzyme catalyses tRNA(His) + L-histidine + ATP = L-histidyl-tRNA(His) + AMP + diphosphate + H(+). The polypeptide is Histidine--tRNA ligase (Shigella flexneri).